The chain runs to 247 residues: Small ribosomal subunit protein uS3 (247 aa).

Residues 39–111 form the KH type-2 domain; it reads IYDFFDKKVR…NISIQVIELK (73 aa). Residues 221–247 form a disordered region; it reads EEMDLLNAPKDRRVRRGGERHASTKKN. Positions 236-247 are enriched in basic and acidic residues; the sequence is RGGERHASTKKN.

It belongs to the universal ribosomal protein uS3 family. As to quaternary structure, part of the 30S ribosomal subunit. Forms a tight complex with proteins S10 and S14.

Functionally, binds the lower part of the 30S subunit head. Binds mRNA in the 70S ribosome, positioning it for translation. This is Small ribosomal subunit protein uS3 from Metamycoplasma arthritidis (strain 158L3-1) (Mycoplasma arthritidis).